A 437-amino-acid polypeptide reads, in one-letter code: Glutamate-1-semialdehyde 2,1-aminomutase (437 aa).

Lys-272 is subject to N6-(pyridoxal phosphate)lysine.

It belongs to the class-III pyridoxal-phosphate-dependent aminotransferase family. HemL subfamily. As to quaternary structure, homodimer. Pyridoxal 5'-phosphate serves as cofactor.

Its subcellular location is the cytoplasm. The catalysed reaction is (S)-4-amino-5-oxopentanoate = 5-aminolevulinate. It functions in the pathway porphyrin-containing compound metabolism; protoporphyrin-IX biosynthesis; 5-aminolevulinate from L-glutamyl-tRNA(Glu): step 2/2. The chain is Glutamate-1-semialdehyde 2,1-aminomutase from Moorella thermoacetica (strain ATCC 39073 / JCM 9320).